The following is a 302-amino-acid chain: 4-hydroxy-tetrahydrodipicolinate synthase (302 aa).

Pyruvate is bound at residue Thr46. The active-site Proton donor/acceptor is Tyr134. Lys162 acts as the Schiff-base intermediate with substrate in catalysis. Ile204 contacts pyruvate.

Belongs to the DapA family. In terms of assembly, homotetramer; dimer of dimers.

It localises to the cytoplasm. The enzyme catalyses L-aspartate 4-semialdehyde + pyruvate = (2S,4S)-4-hydroxy-2,3,4,5-tetrahydrodipicolinate + H2O + H(+). Its pathway is amino-acid biosynthesis; L-lysine biosynthesis via DAP pathway; (S)-tetrahydrodipicolinate from L-aspartate: step 3/4. Its function is as follows. Catalyzes the condensation of (S)-aspartate-beta-semialdehyde [(S)-ASA] and pyruvate to 4-hydroxy-tetrahydrodipicolinate (HTPA). The sequence is that of 4-hydroxy-tetrahydrodipicolinate synthase from Xanthomonas axonopodis pv. citri (strain 306).